The chain runs to 577 residues: Arginine--tRNA ligase (577 aa).

Positions 132 to 142 match the 'HIGH' region motif; that stretch reads ANPTGPLHVGH.

This sequence belongs to the class-I aminoacyl-tRNA synthetase family. In terms of assembly, monomer.

The protein resides in the cytoplasm. It catalyses the reaction tRNA(Arg) + L-arginine + ATP = L-arginyl-tRNA(Arg) + AMP + diphosphate. In Herminiimonas arsenicoxydans, this protein is Arginine--tRNA ligase.